Consider the following 238-residue polypeptide: Sugar fermentation stimulation protein homolog (238 aa).

Belongs to the SfsA family.

This chain is Sugar fermentation stimulation protein homolog, found in Histophilus somni (strain 129Pt) (Haemophilus somnus).